A 206-amino-acid chain; its full sequence is Large ribosomal subunit protein uL4 (206 aa).

A disordered region spans residues 63-94 (MYKQKGTGRARHHSARAPQFRGGGKAHGPVVR). Residues 64-77 (YKQKGTGRARHHSA) show a composition bias toward basic residues.

The protein belongs to the universal ribosomal protein uL4 family. Part of the 50S ribosomal subunit.

Functionally, one of the primary rRNA binding proteins, this protein initially binds near the 5'-end of the 23S rRNA. It is important during the early stages of 50S assembly. It makes multiple contacts with different domains of the 23S rRNA in the assembled 50S subunit and ribosome. Forms part of the polypeptide exit tunnel. The chain is Large ribosomal subunit protein uL4 from Mesorhizobium japonicum (strain LMG 29417 / CECT 9101 / MAFF 303099) (Mesorhizobium loti (strain MAFF 303099)).